The following is a 215-amino-acid chain: Adenylate kinase (215 aa).

10-15 lines the ATP pocket; that stretch reads GAGKGT. The tract at residues 30–59 is NMP; it reads STGDIFRKNIKEKTELGQKVEGLLAQGKLV. Residues threonine 31, arginine 36, 57–59, 85–88, and glutamine 92 each bind AMP; these read KLV and GFPR. The interval 126-163 is LID; the sequence is GRRVCPSCGASYHIDNNPTKVDGICDACQTPVIQREDD. Arginine 127 lines the ATP pocket. Residues cysteine 130 and cysteine 133 each contribute to the Zn(2+) site. Residue 136–137 participates in ATP binding; it reads SY. Cysteine 150 and cysteine 153 together coordinate Zn(2+). Residues arginine 160 and arginine 171 each contribute to the AMP site. Leucine 199 is a binding site for ATP.

The protein belongs to the adenylate kinase family. As to quaternary structure, monomer.

The protein resides in the cytoplasm. It carries out the reaction AMP + ATP = 2 ADP. Its pathway is purine metabolism; AMP biosynthesis via salvage pathway; AMP from ADP: step 1/1. In terms of biological role, catalyzes the reversible transfer of the terminal phosphate group between ATP and AMP. Plays an important role in cellular energy homeostasis and in adenine nucleotide metabolism. The sequence is that of Adenylate kinase from Finegoldia magna (strain ATCC 29328 / DSM 20472 / WAL 2508) (Peptostreptococcus magnus).